We begin with the raw amino-acid sequence, 190 residues long: Guanylate kinase (190 aa).

The 183-residue stretch at 3 to 185 (NYIFIISAPS…SLEQLCKYFE (183 aa)) folds into the Guanylate kinase-like domain. 10-17 (APSGAGKS) lines the ATP pocket.

Belongs to the guanylate kinase family.

Its subcellular location is the cytoplasm. It catalyses the reaction GMP + ATP = GDP + ADP. Functionally, essential for recycling GMP and indirectly, cGMP. The polypeptide is Guanylate kinase (Francisella tularensis subsp. holarctica (strain LVS)).